We begin with the raw amino-acid sequence, 152 residues long: Xanthine-guanine phosphoribosyltransferase (152 aa).

5-phospho-alpha-D-ribose 1-diphosphate contacts are provided by residues 37–38 (RG), arginine 69, and 88–96 (DDLVDTGGT). A GMP-binding site is contributed by arginine 69. Residue aspartate 89 coordinates Mg(2+). The guanine site is built by aspartate 92 and isoleucine 135. The xanthine site is built by aspartate 92 and isoleucine 135. GMP-binding positions include 92–96 (DTGGT) and 134–135 (WI).

This sequence belongs to the purine/pyrimidine phosphoribosyltransferase family. XGPT subfamily. In terms of assembly, homotetramer. Mg(2+) serves as cofactor.

It localises to the cell inner membrane. It carries out the reaction GMP + diphosphate = guanine + 5-phospho-alpha-D-ribose 1-diphosphate. The catalysed reaction is XMP + diphosphate = xanthine + 5-phospho-alpha-D-ribose 1-diphosphate. It catalyses the reaction IMP + diphosphate = hypoxanthine + 5-phospho-alpha-D-ribose 1-diphosphate. Its pathway is purine metabolism; GMP biosynthesis via salvage pathway; GMP from guanine: step 1/1. It participates in purine metabolism; XMP biosynthesis via salvage pathway; XMP from xanthine: step 1/1. Its function is as follows. Purine salvage pathway enzyme that catalyzes the transfer of the ribosyl-5-phosphate group from 5-phospho-alpha-D-ribose 1-diphosphate (PRPP) to the N9 position of the 6-oxopurines guanine and xanthine to form the corresponding ribonucleotides GMP (guanosine 5'-monophosphate) and XMP (xanthosine 5'-monophosphate), with the release of PPi. To a lesser extent, also acts on hypoxanthine. This Serratia proteamaculans (strain 568) protein is Xanthine-guanine phosphoribosyltransferase.